Reading from the N-terminus, the 347-residue chain is Geranylgeranyl pyrophosphate synthase 7, chloroplastic (347 aa).

The transit peptide at M1–L39 directs the protein to the chloroplast. The isopentenyl diphosphate site is built by K95, R98, and H127. The Mg(2+) site is built by D134 and D140. Position 145 (R145) interacts with dimethylallyl diphosphate. R146 serves as a coordination point for isopentenyl diphosphate. Positions 232, 233, 270, 287, and 297 each coordinate dimethylallyl diphosphate.

The protein belongs to the FPP/GGPP synthase family. As to quaternary structure, monomer. It depends on Mg(2+) as a cofactor.

The protein localises to the plastid. It localises to the chloroplast. The enzyme catalyses isopentenyl diphosphate + dimethylallyl diphosphate = (2E)-geranyl diphosphate + diphosphate. It carries out the reaction isopentenyl diphosphate + (2E)-geranyl diphosphate = (2E,6E)-farnesyl diphosphate + diphosphate. It catalyses the reaction isopentenyl diphosphate + (2E,6E)-farnesyl diphosphate = (2E,6E,10E)-geranylgeranyl diphosphate + diphosphate. The protein operates within isoprenoid biosynthesis; farnesyl diphosphate biosynthesis; farnesyl diphosphate from geranyl diphosphate and isopentenyl diphosphate: step 1/1. It functions in the pathway isoprenoid biosynthesis; geranyl diphosphate biosynthesis; geranyl diphosphate from dimethylallyl diphosphate and isopentenyl diphosphate: step 1/1. It participates in isoprenoid biosynthesis; geranylgeranyl diphosphate biosynthesis; geranylgeranyl diphosphate from farnesyl diphosphate and isopentenyl diphosphate: step 1/1. Catalyzes the trans-addition of the three molecules of IPP onto DMAPP to form geranylgeranyl pyrophosphate. The chain is Geranylgeranyl pyrophosphate synthase 7, chloroplastic from Arabidopsis thaliana (Mouse-ear cress).